Here is a 121-residue protein sequence, read N- to C-terminus: Non-structural protein 3a (121 aa).

The N-terminal stretch at 1 to 39 (MMSMRSRRSMFIEHFNELMMRVQRPPTLLLILLVANAFS) is a signal peptide.

This is Non-structural protein 3a from Bat coronavirus HKU5 (BtCoV).